Reading from the N-terminus, the 292-residue chain is MASERLADGDSRYYLLKVAHEQFGCAPGELSEDQLQQADRIIGRQRHIEDAVLRSPDAIGVVIPPSQLEEAWAHIASRYESPEALQQALDAQALDAAGMRAMLARELRVEAVLDCVCAGLPEISDTDVSLYYFNHAEQFKVPAQHKAHILVTINEDFPENTREAARTRIETILKRLRGKPERFAEQAMKHSECPTAMQGGLLGEVVPGTLYPELDACLFQMARGELSPVLESPIGFHVLYCESVSPARQLTLEEILPRLRDRLQLRQRKAYQRKWLVCLLQQNATLENLAHG.

Residues 148-243 (HILVTINEDF…IGFHVLYCES (96 aa)) enclose the PpiC domain.

It belongs to the PpiC/parvulin rotamase family.

It carries out the reaction [protein]-peptidylproline (omega=180) = [protein]-peptidylproline (omega=0). Functionally, required for the activation and stabilization of the iron-component (NifH) of nitrogenase. Probable PPIase. The protein is Putative peptidyl-prolyl cis-trans isomerase NifM (nifM) of Azotobacter vinelandii.